Reading from the N-terminus, the 354-residue chain is Histidinol-phosphate aminotransferase (354 aa).

At Lys-210 the chain carries N6-(pyridoxal phosphate)lysine.

Belongs to the class-II pyridoxal-phosphate-dependent aminotransferase family. Histidinol-phosphate aminotransferase subfamily. In terms of assembly, homodimer. Pyridoxal 5'-phosphate serves as cofactor.

The enzyme catalyses L-histidinol phosphate + 2-oxoglutarate = 3-(imidazol-4-yl)-2-oxopropyl phosphate + L-glutamate. It functions in the pathway amino-acid biosynthesis; L-histidine biosynthesis; L-histidine from 5-phospho-alpha-D-ribose 1-diphosphate: step 7/9. The sequence is that of Histidinol-phosphate aminotransferase from Clostridium botulinum (strain Kyoto / Type A2).